Reading from the N-terminus, the 93-residue chain is Co-chaperonin GroES (93 aa).

It belongs to the GroES chaperonin family. As to quaternary structure, heptamer of 7 subunits arranged in a ring. Interacts with the chaperonin GroEL.

It localises to the cytoplasm. Functionally, together with the chaperonin GroEL, plays an essential role in assisting protein folding. The GroEL-GroES system forms a nano-cage that allows encapsulation of the non-native substrate proteins and provides a physical environment optimized to promote and accelerate protein folding. GroES binds to the apical surface of the GroEL ring, thereby capping the opening of the GroEL channel. This is Co-chaperonin GroES from Streptococcus sanguinis.